A 779-amino-acid polypeptide reads, in one-letter code: Filament-like plant protein 1 (779 aa).

The segment covering Met-1–Gly-14 has biased composition (basic and acidic residues). Disordered stretches follow at residues Met-1 to Lys-55, Ala-253 to Ser-274, and Pro-315 to Pro-336. The stretch at Val-47 to Leu-200 forms a coiled coil. Over residues Asn-256–Asp-272 the composition is skewed to basic and acidic residues. Residues Ser-324–Pro-336 show a composition bias toward low complexity. Positions Ser-337–Leu-674 form a coiled coil. The segment covering Phe-718–Lys-731 has biased composition (basic and acidic residues). The segment at Phe-718 to Phe-764 is disordered. Low complexity predominate over residues Thr-733–Thr-752.

This sequence belongs to the FPP family. Interacts with WPP/MAF proteins.

The protein is Filament-like plant protein 1 (FPP1) of Arabidopsis thaliana (Mouse-ear cress).